Here is a 447-residue protein sequence, read N- to C-terminus: Nisin biosynthesis sensor protein NisK (447 aa).

The next 2 membrane-spanning stretches (helical) occupy residues 15 to 35 (VIEIIIGTCLLILLLLGLTFF) and 147 to 167 (TYLFFFLGEIILIIFSVYHLI). Residues 235-447 (ALSHDVKTPL…GAEVILKIKK (213 aa)) form the Histidine kinase domain. His-238 is subject to Phosphohistidine; by autocatalysis.

It is found in the cell membrane. It carries out the reaction ATP + protein L-histidine = ADP + protein N-phospho-L-histidine.. Functionally, member of the two-component regulatory system NisK/NisR involved in the regulation of the biosynthesis of lantibiotic nisin. NisK may function as a membrane-associated protein kinase that phosphorylates NisR in response to environmental signals. The chain is Nisin biosynthesis sensor protein NisK (nisK) from Lactococcus lactis subsp. lactis (Streptococcus lactis).